The chain runs to 357 residues: 3-isopropylmalate dehydrogenase (357 aa).

76 to 89 contacts NAD(+); sequence GPQWDTIDPALRPE. Residues Arg-96, Arg-106, Arg-134, and Asp-224 each contribute to the substrate site. 3 residues coordinate Mg(2+): Asp-224, Asp-248, and Asp-252. NAD(+) is bound at residue 282–294; the sequence is GSAPDIAGQGVAN.

The protein belongs to the isocitrate and isopropylmalate dehydrogenases family. LeuB type 1 subfamily. In terms of assembly, homodimer. It depends on Mg(2+) as a cofactor. Mn(2+) is required as a cofactor.

It is found in the cytoplasm. It carries out the reaction (2R,3S)-3-isopropylmalate + NAD(+) = 4-methyl-2-oxopentanoate + CO2 + NADH. The protein operates within amino-acid biosynthesis; L-leucine biosynthesis; L-leucine from 3-methyl-2-oxobutanoate: step 3/4. Catalyzes the oxidation of 3-carboxy-2-hydroxy-4-methylpentanoate (3-isopropylmalate) to 3-carboxy-4-methyl-2-oxopentanoate. The product decarboxylates to 4-methyl-2 oxopentanoate. This is 3-isopropylmalate dehydrogenase from Xylella fastidiosa (strain Temecula1 / ATCC 700964).